Reading from the N-terminus, the 256-residue chain is MITIDRRVQTKCSVLGRHKQVFIDMNETVHHQGSFFGRRKGHKLRAHQADLVDNLLPHLALDIELPAPDALAELFDAPVEAVRLEIGFGGGEHLIAEALAHPEIGFIGAEPYVNGMAKILARIEDQNIRNVRLFAGDAAELMAWLPARALKRIDLIHPDPWPKRRHWKRRFVQDSMIGAMARALIDGGEFRFVSDIDSYNAWTLAHLLRAPEFDWTAERADDWRKPWSGYTMTRYGRKAEREGRRASYLRFRRIAA.

Residues Glu-85, Glu-110, Asp-137, and Asp-159 each coordinate S-adenosyl-L-methionine. Asp-159 is an active-site residue. Positions 163 and 195 each coordinate substrate.

It belongs to the class I-like SAM-binding methyltransferase superfamily. TrmB family.

It carries out the reaction guanosine(46) in tRNA + S-adenosyl-L-methionine = N(7)-methylguanosine(46) in tRNA + S-adenosyl-L-homocysteine. It functions in the pathway tRNA modification; N(7)-methylguanine-tRNA biosynthesis. Functionally, catalyzes the formation of N(7)-methylguanine at position 46 (m7G46) in tRNA. This is tRNA (guanine-N(7)-)-methyltransferase from Rhodopseudomonas palustris (strain BisB5).